A 400-amino-acid chain; its full sequence is Elongation factor Tu 1 (400 aa).

Residues 10–209 (KPHVNIGTIG…AVDEYIPTPQ (200 aa)) form the tr-type G domain. The segment at 19–26 (GHVDHGKT) is G1. Residue 19-26 (GHVDHGKT) coordinates GTP. Thr26 serves as a coordination point for Mg(2+). The interval 60 to 64 (GITIN) is G2. The segment at 81 to 84 (DCPG) is G3. Residues 81-85 (DCPGH) and 136-139 (NKAD) contribute to the GTP site. The G4 stretch occupies residues 136-139 (NKAD). Positions 174 to 176 (SAL) are G5.

This sequence belongs to the TRAFAC class translation factor GTPase superfamily. Classic translation factor GTPase family. EF-Tu/EF-1A subfamily. As to quaternary structure, monomer.

The protein localises to the cytoplasm. It catalyses the reaction GTP + H2O = GDP + phosphate + H(+). In terms of biological role, GTP hydrolase that promotes the GTP-dependent binding of aminoacyl-tRNA to the A-site of ribosomes during protein biosynthesis. The polypeptide is Elongation factor Tu 1 (Pelotomaculum thermopropionicum (strain DSM 13744 / JCM 10971 / SI)).